We begin with the raw amino-acid sequence, 446 residues long: Tubulin beta-8 chain (446 aa).

GTP contacts are provided by glutamine 11, glutamate 69, serine 138, glycine 142, threonine 143, glycine 144, asparagine 204, and asparagine 226. Glutamate 69 lines the Mg(2+) pocket. Positions glutamine 426–alanine 446 are disordered. Residues threonine 429–alanine 446 are compositionally biased toward acidic residues.

The protein belongs to the tubulin family. Dimer of alpha and beta chains. A typical microtubule is a hollow water-filled tube with an outer diameter of 25 nm and an inner diameter of 15 nM. Alpha-beta heterodimers associate head-to-tail to form protofilaments running lengthwise along the microtubule wall with the beta-tubulin subunit facing the microtubule plus end conferring a structural polarity. Microtubules usually have 13 protofilaments but different protofilament numbers can be found in some organisms and specialized cells. Mg(2+) is required as a cofactor. As to expression, expressed in anthers.

Its subcellular location is the cytoplasm. The protein localises to the cytoskeleton. Its function is as follows. Tubulin is the major constituent of microtubules, a cylinder consisting of laterally associated linear protofilaments composed of alpha- and beta-tubulin heterodimers. Microtubules grow by the addition of GTP-tubulin dimers to the microtubule end, where a stabilizing cap forms. Below the cap, tubulin dimers are in GDP-bound state, owing to GTPase activity of alpha-tubulin. The polypeptide is Tubulin beta-8 chain (TUBB8) (Oryza sativa subsp. japonica (Rice)).